A 501-amino-acid chain; its full sequence is Glycerol kinase (501 aa).

Threonine 17 is a binding site for ADP. Threonine 17, threonine 18, and serine 19 together coordinate ATP. Threonine 17 is a sn-glycerol 3-phosphate binding site. Arginine 21 is a binding site for ADP. Arginine 87, glutamate 88, tyrosine 139, and aspartate 243 together coordinate sn-glycerol 3-phosphate. Glycerol-binding residues include arginine 87, glutamate 88, tyrosine 139, aspartate 243, and glutamine 244. Threonine 265 and glycine 308 together coordinate ADP. ATP-binding residues include threonine 265, glycine 308, glutamine 312, and glycine 409. Positions 409 and 413 each coordinate ADP.

It belongs to the FGGY kinase family.

It catalyses the reaction glycerol + ATP = sn-glycerol 3-phosphate + ADP + H(+). The protein operates within polyol metabolism; glycerol degradation via glycerol kinase pathway; sn-glycerol 3-phosphate from glycerol: step 1/1. Inhibited by fructose 1,6-bisphosphate (FBP). Functionally, key enzyme in the regulation of glycerol uptake and metabolism. Catalyzes the phosphorylation of glycerol to yield sn-glycerol 3-phosphate. The protein is Glycerol kinase of Pseudomonas syringae pv. syringae (strain B728a).